Here is a 345-residue protein sequence, read N- to C-terminus: Dihydroorotate dehydrogenase (quinone) (345 aa).

FMN is bound by residues 65 to 69 (AGLDK) and Thr89. A substrate-binding site is contributed by Lys69. 114–118 (NRMGF) lines the substrate pocket. Residues Asn142 and Asn175 each coordinate FMN. Asn175 contacts substrate. Catalysis depends on Ser178, which acts as the Nucleophile. Asn180 is a substrate binding site. The FMN site is built by Lys220 and Thr248. A substrate-binding site is contributed by 249–250 (NT). FMN is bound by residues Gly271, Gly300, and 321–322 (YT).

It belongs to the dihydroorotate dehydrogenase family. Type 2 subfamily. Monomer. FMN serves as cofactor.

Its subcellular location is the cell membrane. The enzyme catalyses (S)-dihydroorotate + a quinone = orotate + a quinol. Its pathway is pyrimidine metabolism; UMP biosynthesis via de novo pathway; orotate from (S)-dihydroorotate (quinone route): step 1/1. Functionally, catalyzes the conversion of dihydroorotate to orotate with quinone as electron acceptor. This chain is Dihydroorotate dehydrogenase (quinone), found in Burkholderia lata (strain ATCC 17760 / DSM 23089 / LMG 22485 / NCIMB 9086 / R18194 / 383).